A 683-amino-acid chain; its full sequence is 1,4-alpha-glucan-branching enzyme (683 aa).

(1,4-alpha-D-glucosyl)n contacts are provided by Trp-92 and Lys-127. Asp-342 (nucleophile) is an active-site residue. Glu-397 (proton donor) is an active-site residue.

The protein belongs to the glycosyl hydrolase 13 family. GlgB subfamily.

It localises to the cytoplasm. It catalyses the reaction Transfers a segment of a (1-&gt;4)-alpha-D-glucan chain to a primary hydroxy group in a similar glucan chain.. The protein operates within glycan biosynthesis; glycogen biosynthesis. Glycogen-branching enzyme participates in the glycogen biosynthetic process along with glycogenin and glycogen synthase. Generates alpha-1,6-glucosidic branches from alpha-1,4-linked glucose chains, to increase solubility of the glycogen polymer. This Rhizophagus irregularis (strain DAOM 181602 / DAOM 197198 / MUCL 43194) (Arbuscular mycorrhizal fungus) protein is 1,4-alpha-glucan-branching enzyme (GLC3).